The following is a 230-amino-acid chain: uncharacterized protein (230 aa).

7 helical membrane-spanning segments follow: residues 8–28 (SLIL…TMAF), 45–65 (SIIL…FIIF), 72–92 (LVLL…FLYL), 109–129 (PFSL…SVIS), 141–161 (IYVL…LLLA), 176–196 (MGIL…AIIF), and 203–223 (IYFL…LILF).

This sequence to P.aeruginosa PA0043 and M.thermoautotrophicum MTH1451.

The protein resides in the cell membrane. This is an uncharacterized protein from Aquifex aeolicus (strain VF5).